The primary structure comprises 819 residues: Lon protease (819 aa).

Residues 1–14 (MNSTNNTDSQNLDP) show a composition bias toward polar residues. Residues 1 to 41 (MNSTNNTDSQNLDPNASEVEKLLDESAEAEEKTDDHTPPSE) form a disordered region. A compositionally biased stretch (basic and acidic residues) spans 18 to 38 (EVEKLLDESAEAEEKTDDHTP). The Lon N-terminal domain maps to 42–239 (LFILPLNKRP…KALVLLKKEL (198 aa)). Residue 392 to 399 (GPPGVGKT) coordinates ATP. The region spanning 634–818 (KTPVGVATGL…DDVFKIAFPG (185 aa)) is the Lon proteolytic domain. Active-site residues include Ser-724 and Lys-767.

This sequence belongs to the peptidase S16 family. As to quaternary structure, homohexamer. Organized in a ring with a central cavity.

The protein resides in the cytoplasm. It catalyses the reaction Hydrolysis of proteins in presence of ATP.. ATP-dependent serine protease that mediates the selective degradation of mutant and abnormal proteins as well as certain short-lived regulatory proteins. Required for cellular homeostasis and for survival from DNA damage and developmental changes induced by stress. Degrades polypeptides processively to yield small peptide fragments that are 5 to 10 amino acids long. Binds to DNA in a double-stranded, site-specific manner. This is Lon protease from Chlamydia muridarum (strain MoPn / Nigg).